A 125-amino-acid polypeptide reads, in one-letter code: uncharacterized protein (125 aa).

This is an uncharacterized protein from Aquifex aeolicus (strain VF5).